A 365-amino-acid polypeptide reads, in one-letter code: 3-dehydroquinate synthase (365 aa).

Residues 106–110 (GVIGD), 130–131 (TT), K142, K151, and 169–172 (FFAT) contribute to the NAD(+) site. Positions 184, 247, and 264 each coordinate Zn(2+).

This sequence belongs to the sugar phosphate cyclases superfamily. Dehydroquinate synthase family. Co(2+) serves as cofactor. It depends on Zn(2+) as a cofactor. NAD(+) is required as a cofactor.

It localises to the cytoplasm. The catalysed reaction is 7-phospho-2-dehydro-3-deoxy-D-arabino-heptonate = 3-dehydroquinate + phosphate. It functions in the pathway metabolic intermediate biosynthesis; chorismate biosynthesis; chorismate from D-erythrose 4-phosphate and phosphoenolpyruvate: step 2/7. Catalyzes the conversion of 3-deoxy-D-arabino-heptulosonate 7-phosphate (DAHP) to dehydroquinate (DHQ). The sequence is that of 3-dehydroquinate synthase from Listeria monocytogenes serotype 4b (strain CLIP80459).